We begin with the raw amino-acid sequence, 83 residues long: Blackelin-5 (83 aa).

Residues Met1–Ser24 form the signal peptide. One can recognise a BPTI/Kunitz inhibitor domain in the interval Cys31–Cys81. Disulfide bonds link Cys31-Cys81, Cys40-Cys64, and Cys56-Cys77.

It localises to the secreted. Serine protease inhibitor. This chain is Blackelin-5, found in Pseudechis porphyriacus (Red-bellied black snake).